The chain runs to 570 residues: Hemagglutinin-neuraminidase (570 aa).

Over 1–26 the chain is Intravirion; that stretch reads MNRAVCQVALENDEREAKNTWRLVFR. Residues 27–48 traverse the membrane as a helical segment; the sequence is IAILLLTVMTLAISAAALAYSM. Residues 49–570 are Virion surface-facing; it reads EASTPGDLVS…LVEILKDDGV (522 aa). The N-linked (GlcNAc...) asparagine; by host glycan is linked to asparagine 119. The segment at 124-152 is important for interaction with fusion/F protein; the sequence is GAPVHDPDYIGGIGKELIVDDTSDVTSFY. 3 disulfides stabilise this stretch: cysteine 172/cysteine 195, cysteine 185/cysteine 246, and cysteine 237/cysteine 250. The segment at 233 to 238 is involved in neuraminidase activity; sequence NRKSCS. Asparagine 340 and asparagine 432 each carry an N-linked (GlcNAc...) asparagine; by host glycan. Intrachain disulfides connect cysteine 343–cysteine 460 and cysteine 454–cysteine 464. 3 N-linked (GlcNAc...) asparagine; by host glycosylation sites follow: asparagine 480, asparagine 507, and asparagine 537. Cysteine 530 and cysteine 541 are oxidised to a cystine.

Belongs to the paramyxoviruses hemagglutinin-neuraminidase family. As to quaternary structure, homotetramer; composed of disulfide-linked homodimers. Interacts with F protein trimer. Interacts with host CG-1B; this interaction inhibits viral adsorption and replication rather than internalization.

It is found in the virion membrane. Its subcellular location is the host cell membrane. The enzyme catalyses Hydrolysis of alpha-(2-&gt;3)-, alpha-(2-&gt;6)-, alpha-(2-&gt;8)- glycosidic linkages of terminal sialic acid residues in oligosaccharides, glycoproteins, glycolipids, colominic acid and synthetic substrates.. Its function is as follows. Mediates the viral entry into the host cell together with fusion/F protein. Attaches the virus to sialic acid-containing cell receptors and thereby initiates infection. Binding of HN protein to the receptor induces a conformational change that allows the F protein to trigger virion/cell membranes fusion. In terms of biological role, neuraminidase activity ensures the efficient spread of the virus by dissociating the mature virions from the neuraminic acid containing glycoproteins. The protein is Hemagglutinin-neuraminidase (HN) of Gallus gallus (Chicken).